Reading from the N-terminus, the 98-residue chain is NADH-ubiquinone oxidoreductase chain 4L (98 aa).

Transmembrane regions (helical) follow at residues 1–21 (MSMVYFNIFMAFTVSFVGLLM), 29–49 (SLLCLEGMMLSLFVMMSMTIL), and 61–81 (IILLVFAACEAALGLSLLVMV).

The protein belongs to the complex I subunit 4L family. As to quaternary structure, core subunit of respiratory chain NADH dehydrogenase (Complex I) which is composed of 45 different subunits.

It is found in the mitochondrion inner membrane. It carries out the reaction a ubiquinone + NADH + 5 H(+)(in) = a ubiquinol + NAD(+) + 4 H(+)(out). In terms of biological role, core subunit of the mitochondrial membrane respiratory chain NADH dehydrogenase (Complex I) which catalyzes electron transfer from NADH through the respiratory chain, using ubiquinone as an electron acceptor. Part of the enzyme membrane arm which is embedded in the lipid bilayer and involved in proton translocation. This chain is NADH-ubiquinone oxidoreductase chain 4L (MT-ND4L), found in Phocarctos hookeri (Hooker's sea lion).